The primary structure comprises 343 residues: Phenylalanine--tRNA ligase alpha subunit (343 aa).

Residue Glu256 coordinates Mg(2+).

It belongs to the class-II aminoacyl-tRNA synthetase family. Phe-tRNA synthetase alpha subunit type 1 subfamily. As to quaternary structure, tetramer of two alpha and two beta subunits. It depends on Mg(2+) as a cofactor.

The protein localises to the cytoplasm. It carries out the reaction tRNA(Phe) + L-phenylalanine + ATP = L-phenylalanyl-tRNA(Phe) + AMP + diphosphate + H(+). The protein is Phenylalanine--tRNA ligase alpha subunit of Prosthecochloris aestuarii (strain DSM 271 / SK 413).